A 334-amino-acid chain; its full sequence is Phospholipase A1 1 (334 aa).

The signal sequence occupies residues 1–23; that stretch reads MMNLKYLLFFCLVQALHYCYAYG. Positions 24 to 33 are excised as a propeptide; sequence DPSLSNELDR. A disulfide bridge connects residues Cys-37 and Cys-120. Catalysis depends on Ser-170, which acts as the Nucleophile. The Charge relay system role is filled by Asp-198. Cystine bridges form between Cys-209/Cys-214 and Cys-252/Cys-261. The active-site Charge relay system is His-263. 3 disulfides stabilise this stretch: Cys-278-Cys-302, Cys-279-Cys-327, and Cys-295-Cys-300.

This sequence belongs to the AB hydrolase superfamily. Lipase family. In terms of processing, not glycosylated. In terms of tissue distribution, expressed by the venom gland.

The protein resides in the secreted. The enzyme catalyses a 1,2-diacyl-sn-glycero-3-phosphocholine + H2O = a 2-acyl-sn-glycero-3-phosphocholine + a fatty acid + H(+). Functionally, catalyzes the hydrolysis of phosphatidylcholine with phospholipase A1 activity (3.6 U/ml). May act as an allergen and induce hemolytic activity. In vivo, a mixture of this protein and Ves a 1.02 is able to paralyze crickets. The protein is Phospholipase A1 1 of Vespa affinis (Lesser banded hornet).